A 288-amino-acid polypeptide reads, in one-letter code: Putative N-terminal acetyltransferase 2 (288 aa).

The interval Thr68–Pro90 is disordered.

In terms of assembly, heterooligomeric.

It localises to the cytoplasm. Maybe involved in N-terminal acetylation of proteins. N-acetylation plays a role in normal eukaryotic translation and processing, protect against proteolytic degradation and protein turnover. The sequence is that of Putative N-terminal acetyltransferase 2 (NAT2) from Saccharomyces cerevisiae (strain ATCC 204508 / S288c) (Baker's yeast).